The chain runs to 587 residues: 5-aminolevulinate synthase, erythroid-specific, mitochondrial (587 aa).

Residues methionine 1–serine 49 constitute a mitochondrion transit peptide. Residue arginine 163 coordinates succinyl-CoA. Residues cysteine 258 and phenylalanine 259 each coordinate pyridoxal 5'-phosphate. 2 residues coordinate succinyl-CoA: serine 280 and lysine 299. Pyridoxal 5'-phosphate-binding residues include serine 332, histidine 360, and threonine 388. The active site involves lysine 391. Lysine 391 bears the N6-(pyridoxal phosphate)lysine mark. Pyridoxal 5'-phosphate contacts are provided by threonine 420 and threonine 421. Threonine 508 serves as a coordination point for succinyl-CoA.

This sequence belongs to the class-II pyridoxal-phosphate-dependent aminotransferase family. As to quaternary structure, homodimer. Interacts with SUCLA2. It depends on pyridoxal 5'-phosphate as a cofactor. Erythroid-specific.

The protein resides in the mitochondrion inner membrane. It carries out the reaction succinyl-CoA + glycine + H(+) = 5-aminolevulinate + CO2 + CoA. It participates in porphyrin-containing compound metabolism; protoporphyrin-IX biosynthesis; 5-aminolevulinate from glycine: step 1/1. Functionally, catalyzes the pyridoxal 5'-phosphate (PLP)-dependent condensation of succinyl-CoA and glycine to form aminolevulinic acid (ALA), with CoA and CO2 as by-products. Contributes significantly to heme formation during erythropoiesis. The polypeptide is 5-aminolevulinate synthase, erythroid-specific, mitochondrial (Alas2) (Rattus norvegicus (Rat)).